Reading from the N-terminus, the 89-residue chain is Small ribosomal subunit protein uS14A (89 aa).

The protein belongs to the universal ribosomal protein uS14 family. Part of the 30S ribosomal subunit. Contacts proteins S3 and S10.

Its function is as follows. Binds 16S rRNA, required for the assembly of 30S particles and may also be responsible for determining the conformation of the 16S rRNA at the A site. This Bacillus velezensis (strain DSM 23117 / BGSC 10A6 / LMG 26770 / FZB42) (Bacillus amyloliquefaciens subsp. plantarum) protein is Small ribosomal subunit protein uS14A.